The following is a 110-amino-acid chain: Large ribosomal subunit protein uL22 (110 aa).

It belongs to the universal ribosomal protein uL22 family. In terms of assembly, part of the 50S ribosomal subunit.

In terms of biological role, this protein binds specifically to 23S rRNA; its binding is stimulated by other ribosomal proteins, e.g. L4, L17, and L20. It is important during the early stages of 50S assembly. It makes multiple contacts with different domains of the 23S rRNA in the assembled 50S subunit and ribosome. The globular domain of the protein is located near the polypeptide exit tunnel on the outside of the subunit, while an extended beta-hairpin is found that lines the wall of the exit tunnel in the center of the 70S ribosome. The sequence is that of Large ribosomal subunit protein uL22 from Haemophilus influenzae (strain 86-028NP).